The sequence spans 65 residues: Large ribosomal subunit protein uL29 (65 aa).

It belongs to the universal ribosomal protein uL29 family.

This Mycoplasmopsis synoviae (strain 53) (Mycoplasma synoviae) protein is Large ribosomal subunit protein uL29.